The chain runs to 301 residues: NADH-cytochrome b5 reductase 2 (301 aa).

Residues 14-30 (FLVPFAGATALSIGLAL) traverse the membrane as a helical segment. The FAD-binding FR-type domain maps to 51–155 (NEWVDLKLSK…KGPIVKWKWE (105 aa)). Residue 158–193 (QFKSIALIGGGTGITPLYQLLHQITSNPKDNTKVNL) coordinates FAD.

Belongs to the flavoprotein pyridine nucleotide cytochrome reductase family. It depends on FAD as a cofactor.

The protein resides in the mitochondrion outer membrane. The catalysed reaction is 2 Fe(III)-[cytochrome b5] + NADH = 2 Fe(II)-[cytochrome b5] + NAD(+) + H(+). In terms of biological role, may mediate the reduction of outer membrane cytochrome b5. The chain is NADH-cytochrome b5 reductase 2 (MCR1) from Candida albicans (strain SC5314 / ATCC MYA-2876) (Yeast).